The sequence spans 150 residues: Ribonuclease HI (150 aa).

One can recognise an RNase H type-1 domain in the interval M1 to D142. Mg(2+)-binding residues include D10, E48, D70, and D134.

This sequence belongs to the RNase H family. As to quaternary structure, monomer. Mg(2+) serves as cofactor.

The protein localises to the cytoplasm. The catalysed reaction is Endonucleolytic cleavage to 5'-phosphomonoester.. Functionally, endonuclease that specifically degrades the RNA of RNA-DNA hybrids. The sequence is that of Ribonuclease HI from Pseudomonas syringae pv. tomato (strain ATCC BAA-871 / DC3000).